The chain runs to 59 residues: Small ribosomal subunit protein bS21 (59 aa).

The interval 40–59 is disordered; the sequence is KPSVKRKKKSEAARKRKSFR. Residues 43–59 show a composition bias toward basic residues; the sequence is VKRKKKSEAARKRKSFR.

The protein belongs to the bacterial ribosomal protein bS21 family.

The sequence is that of Small ribosomal subunit protein bS21 from Desulforamulus reducens (strain ATCC BAA-1160 / DSM 100696 / MI-1) (Desulfotomaculum reducens).